The sequence spans 161 residues: Nucleotide-binding protein Bcep1808_2648 (161 aa).

This sequence belongs to the YajQ family.

Nucleotide-binding protein. The polypeptide is Nucleotide-binding protein Bcep1808_2648 (Burkholderia vietnamiensis (strain G4 / LMG 22486) (Burkholderia cepacia (strain R1808))).